The following is a 60-amino-acid chain: Toxin 4.9.6 (60 aa).

4 disulfides stabilise this stretch: Cys-3-Cys-22, Cys-17-Cys-38, Cys-40-Cys-52, and Cys-53-Cys-58.

This sequence belongs to the three-finger toxin family. Short-chain subfamily. Orphan group XI sub-subfamily. Expressed by the venom gland.

The protein localises to the secreted. The sequence is that of Toxin 4.9.6 from Dendroaspis viridis (Western green mamba).